A 942-amino-acid polypeptide reads, in one-letter code: Leucine--tRNA ligase (942 aa).

The 'HIGH' region motif lies at 41 to 51 (PYLNGVLHAGH). The 'KMSKS' region motif lies at 633-637 (KLSKS). ATP is bound at residue lysine 636.

The protein belongs to the class-I aminoacyl-tRNA synthetase family.

It localises to the cytoplasm. It carries out the reaction tRNA(Leu) + L-leucine + ATP = L-leucyl-tRNA(Leu) + AMP + diphosphate. The sequence is that of Leucine--tRNA ligase from Methanocaldococcus jannaschii (strain ATCC 43067 / DSM 2661 / JAL-1 / JCM 10045 / NBRC 100440) (Methanococcus jannaschii).